We begin with the raw amino-acid sequence, 271 residues long: 4-diphosphocytidyl-2-C-methyl-D-erythritol kinase (271 aa).

Lysine 17 is a catalytic residue. 97 to 107 is an ATP binding site; it reads PVGSGLGGGSS. Residue aspartate 137 is part of the active site.

Belongs to the GHMP kinase family. IspE subfamily.

The catalysed reaction is 4-CDP-2-C-methyl-D-erythritol + ATP = 4-CDP-2-C-methyl-D-erythritol 2-phosphate + ADP + H(+). The protein operates within isoprenoid biosynthesis; isopentenyl diphosphate biosynthesis via DXP pathway; isopentenyl diphosphate from 1-deoxy-D-xylulose 5-phosphate: step 3/6. In terms of biological role, catalyzes the phosphorylation of the position 2 hydroxy group of 4-diphosphocytidyl-2C-methyl-D-erythritol. In Thermotoga maritima (strain ATCC 43589 / DSM 3109 / JCM 10099 / NBRC 100826 / MSB8), this protein is 4-diphosphocytidyl-2-C-methyl-D-erythritol kinase.